A 145-amino-acid polypeptide reads, in one-letter code: Neutral phospholipase A2 paradoxin-like beta chain (145 aa).

The N-terminal stretch at 1 to 27 is a signal peptide; the sequence is MHPAHLLVLLAVCVSLLGASDIPPLPL. Intrachain disulfides connect Cys-38/Cys-98, Cys-54/Cys-144, Cys-56/Cys-72, Cys-71/Cys-125, Cys-78/Cys-118, Cys-87/Cys-111, and Cys-105/Cys-116.

It belongs to the phospholipase A2 family. Group I subfamily. N49 sub-subfamily. As to quaternary structure, heterotrimer of alpha, beta, and gamma chains; non-covalently linked. Expressed by the venom gland.

The protein resides in the secreted. Heterotrimer: Snake venom phospholipase A2 (PLA2) heterotrimer that acts as a potent presynaptic neurotoxin by blocking synaptic transmission and synaptic vesicle recycling. May act by binding in a calcium-dependent fashion to neurotonal pentraxin-1 (NPTX1) and neurotonal pentraxin-2 (NPTX2), but not to neuronal pentraxin receptor (NPTXR). Also binds to taipoxin-associated calcium binding protein 49 (RCN2), a protein localized in the lumen of endoplasmic reticulum. Its function is as follows. Monomer (beta chain): Snake venom phospholipase A2 homolog that is neither toxic nor enzymatically active. Does not bind calcium. The chain is Neutral phospholipase A2 paradoxin-like beta chain from Oxyuranus microlepidotus (Inland taipan).